The following is a 245-amino-acid chain: Ubiquinone/menaquinone biosynthesis C-methyltransferase UbiE (245 aa).

S-adenosyl-L-methionine-binding positions include Thr71, Asp92, and 118-119 (DA).

The protein belongs to the class I-like SAM-binding methyltransferase superfamily. MenG/UbiE family.

The enzyme catalyses a 2-demethylmenaquinol + S-adenosyl-L-methionine = a menaquinol + S-adenosyl-L-homocysteine + H(+). It carries out the reaction a 2-methoxy-6-(all-trans-polyprenyl)benzene-1,4-diol + S-adenosyl-L-methionine = a 5-methoxy-2-methyl-3-(all-trans-polyprenyl)benzene-1,4-diol + S-adenosyl-L-homocysteine + H(+). It participates in quinol/quinone metabolism; menaquinone biosynthesis; menaquinol from 1,4-dihydroxy-2-naphthoate: step 2/2. Its pathway is cofactor biosynthesis; ubiquinone biosynthesis. Its function is as follows. Methyltransferase required for the conversion of demethylmenaquinol (DMKH2) to menaquinol (MKH2) and the conversion of 2-polyprenyl-6-methoxy-1,4-benzoquinol (DDMQH2) to 2-polyprenyl-3-methyl-6-methoxy-1,4-benzoquinol (DMQH2). The chain is Ubiquinone/menaquinone biosynthesis C-methyltransferase UbiE from Neisseria meningitidis serogroup C (strain 053442).